Here is a 71-residue protein sequence, read N- to C-terminus: Small ribosomal subunit protein bS21 (71 aa).

The span at 48–60 shows a compositional bias: basic residues; the sequence is KKAAAVKRYKKKL. Residues 48–71 form a disordered region; it reads KKAAAVKRYKKKLQRESIRTTRMY. The span at 61–71 shows a compositional bias: basic and acidic residues; it reads QRESIRTTRMY.

This sequence belongs to the bacterial ribosomal protein bS21 family.

The sequence is that of Small ribosomal subunit protein bS21 from Psychrobacter sp. (strain PRwf-1).